The following is a 324-amino-acid chain: ATP synthase subunit a 2 (324 aa).

The signal sequence occupies residues 1–33; that stretch reads MKRVNVFRSGVFSRLFALLLPFLLGINGLVYAS. Transmembrane regions (helical) follow at residues 95-115, 157-177, 179-199, 224-244, 257-277, and 291-311; these read HVVM…LVGN, LPYL…GLVP, GATA…TFFI, ALWI…PFAL, IVIL…VAMF, and IFVA…FIGL.

This sequence belongs to the ATPase A chain family. In terms of assembly, F-type ATPases have 2 components, CF(1) - the catalytic core - and CF(0) - the membrane proton channel. CF(1) has five subunits: alpha(3), beta(3), gamma(1), delta(1), epsilon(1). CF(0) has four main subunits: a, b, b' and c.

It is found in the cell inner membrane. Key component of the proton channel; it plays a direct role in the translocation of protons across the membrane. The sequence is that of ATP synthase subunit a 2 from Prosthecochloris aestuarii (strain DSM 271 / SK 413).